Here is a 254-residue protein sequence, read N- to C-terminus: Rho-related protein racD (254 aa).

15 to 22 (GDGAVGKT) is a GTP binding site. The Effector region signature appears at 37–45 (YVPTVFDNF). Residues 62-66 (DTAGQ) and 120-123 (TKTD) contribute to the GTP site. Low complexity predominate over residues 186 to 231 (AVTSPTSKSSGKSSPSSTSSKPSKTTTTTTTSSSSSSPPAASTAKP). Residues 186–254 (AVTSPTSKSS…KDKDEKKPAK (69 aa)) are disordered. Positions 232–254 (AGEKKLSWGLFRKKDKDEKKPAK) are enriched in basic and acidic residues.

This sequence belongs to the small GTPase superfamily. Rho family.

This Dictyostelium discoideum (Social amoeba) protein is Rho-related protein racD (racD).